The following is a 384-amino-acid chain: MRALSILGSTGSIGLSTLDVVRRHKESFSVVGLAEGHDVHALAEQIKEFRPTIVSVRDENAADELKTLLGPADRPEIVHGIEGAGTVAAAEGSDMVVSAIVGAAGLTPTIKAIKAGKDIALANKETLVVAGQLVSDLVKQNGVELLPVDSEHSAIFQSLLGHRAEDVERIILTASGGPFRNTPLEEMKKAGPEQALKHPQWTMGAKITIDSATMMNKGLEVIEAHWLFNMPADRIGVVVHPQSIVHSMVEYRDGCVIAQLGSPDMRAPIAYALSYPERSESGVKKLNLAEIGTLTFEEPDMVRFPALQLAFDALKAGKTYPAVLNAANEIAVAAFLNKQIGFTDIADTVDKTMQAHEAYTPMELDEYIHADRWARQTASTFISS.

NADPH contacts are provided by threonine 10, glycine 11, serine 12, isoleucine 13, glycine 36, and asparagine 123. Position 124 (lysine 124) interacts with 1-deoxy-D-xylulose 5-phosphate. Position 125 (glutamate 125) interacts with NADPH. A Mn(2+)-binding site is contributed by aspartate 149. Residues serine 150, glutamate 151, serine 175, and histidine 198 each coordinate 1-deoxy-D-xylulose 5-phosphate. Glutamate 151 contributes to the Mn(2+) binding site. NADPH is bound at residue glycine 204. 1-deoxy-D-xylulose 5-phosphate-binding residues include serine 211, asparagine 216, lysine 217, and glutamate 220. Residue glutamate 220 coordinates Mn(2+).

Belongs to the DXR family. It depends on Mg(2+) as a cofactor. Requires Mn(2+) as cofactor.

It carries out the reaction 2-C-methyl-D-erythritol 4-phosphate + NADP(+) = 1-deoxy-D-xylulose 5-phosphate + NADPH + H(+). It functions in the pathway isoprenoid biosynthesis; isopentenyl diphosphate biosynthesis via DXP pathway; isopentenyl diphosphate from 1-deoxy-D-xylulose 5-phosphate: step 1/6. In terms of biological role, catalyzes the NADPH-dependent rearrangement and reduction of 1-deoxy-D-xylulose-5-phosphate (DXP) to 2-C-methyl-D-erythritol 4-phosphate (MEP). This chain is 1-deoxy-D-xylulose 5-phosphate reductoisomerase, found in Chlorobium phaeovibrioides (strain DSM 265 / 1930) (Prosthecochloris vibrioformis (strain DSM 265)).